Here is a 382-residue protein sequence, read N- to C-terminus: Glycerate dehydrogenase (382 aa).

Residues 175 to 176 (RI), 271 to 273 (CSR), and aspartate 297 contribute to the NAD(+) site. Arginine 273 is an active-site residue. Glutamate 302 is an active-site residue. The active-site Proton donor is histidine 320. Residue 320-323 (HIAS) participates in NAD(+) binding.

This sequence belongs to the D-isomer specific 2-hydroxyacid dehydrogenase family.

Its subcellular location is the peroxisome. The enzyme catalyses (R)-glycerate + NAD(+) = 3-hydroxypyruvate + NADH + H(+). It functions in the pathway photosynthesis; photorespiration; 3-phospho-D-glycerate from glycine: step 3/4. The sequence is that of Glycerate dehydrogenase (HPR-A) from Cucumis sativus (Cucumber).